The following is a 170-amino-acid chain: NADH-dependent flavin reductase StyB (170 aa).

The protein belongs to the non-flavoprotein flavin reductase family. As to quaternary structure, homodimer.

The catalysed reaction is a reduced flavin + NAD(+) = an oxidized flavin + NADH + 2 H(+). It functions in the pathway aromatic compound metabolism. Functionally, reductase component of a two-component system that catalyzes the first step in the aerobic styrene degradation pathway by enantioselective epoxidation of the vinyl side chain. Utilizes NADH to reduce FAD, which is then transferred to the styrene monooxygenase StyA. This Pseudomonas fluorescens protein is NADH-dependent flavin reductase StyB (styB).